A 208-amino-acid chain; its full sequence is dITP/XTP pyrophosphatase (208 aa).

16–21 (TGNAGK) contributes to the substrate binding site. Residues glutamate 46 and aspartate 75 each coordinate Mg(2+). Catalysis depends on aspartate 75, which acts as the Proton acceptor. Residues serine 76, 155–158 (FGYD), lysine 178, and 183–184 (HR) each bind substrate.

Belongs to the HAM1 NTPase family. In terms of assembly, homodimer. Requires Mg(2+) as cofactor.

The catalysed reaction is XTP + H2O = XMP + diphosphate + H(+). It catalyses the reaction dITP + H2O = dIMP + diphosphate + H(+). The enzyme catalyses ITP + H2O = IMP + diphosphate + H(+). Its function is as follows. Pyrophosphatase that catalyzes the hydrolysis of nucleoside triphosphates to their monophosphate derivatives, with a high preference for the non-canonical purine nucleotides XTP (xanthosine triphosphate), dITP (deoxyinosine triphosphate) and ITP. Seems to function as a house-cleaning enzyme that removes non-canonical purine nucleotides from the nucleotide pool, thus preventing their incorporation into DNA/RNA and avoiding chromosomal lesions. The polypeptide is dITP/XTP pyrophosphatase (Deinococcus deserti (strain DSM 17065 / CIP 109153 / LMG 22923 / VCD115)).